Here is a 556-residue protein sequence, read N- to C-terminus: Oxygen-dependent choline dehydrogenase (556 aa).

4-33 lines the FAD pocket; sequence DYIIIGAGSAGNVLATRLTEDPNTSVLLLE. His473 (proton acceptor) is an active-site residue.

The protein belongs to the GMC oxidoreductase family. FAD is required as a cofactor.

It carries out the reaction choline + A = betaine aldehyde + AH2. The catalysed reaction is betaine aldehyde + NAD(+) + H2O = glycine betaine + NADH + 2 H(+). Its pathway is amine and polyamine biosynthesis; betaine biosynthesis via choline pathway; betaine aldehyde from choline (cytochrome c reductase route): step 1/1. Its function is as follows. Involved in the biosynthesis of the osmoprotectant glycine betaine. Catalyzes the oxidation of choline to betaine aldehyde and betaine aldehyde to glycine betaine at the same rate. The protein is Oxygen-dependent choline dehydrogenase of Shigella flexneri serotype 5b (strain 8401).